A 376-amino-acid polypeptide reads, in one-letter code: UDP-N-acetylglucosamine 2-epimerase (376 aa).

Substrate is bound by residues R10, K15, D95, E117, H213, Q271, F276, 290–292 (SGG), E296, and R313.

Belongs to the UDP-N-acetylglucosamine 2-epimerase family. In terms of assembly, homodimer.

It localises to the cytoplasm. It catalyses the reaction UDP-N-acetyl-alpha-D-glucosamine = UDP-N-acetyl-alpha-D-mannosamine. It participates in bacterial outer membrane biogenesis; enterobacterial common antigen biosynthesis. In terms of biological role, catalyzes the reversible epimerization at C-2 of UDP-N-acetylglucosamine (UDP-GlcNAc) and thereby provides bacteria with UDP-N-acetylmannosamine (UDP-ManNAc), the activated donor of ManNAc residues. The chain is UDP-N-acetylglucosamine 2-epimerase from Yersinia pestis.